A 436-amino-acid polypeptide reads, in one-letter code: Cytokine receptor-like factor 3 (436 aa).

Residues 9-87 adopt a coiled-coil conformation; the sequence is LMQEAWESID…VSAIEQENIK (79 aa). One can recognise a Fibronectin type-III domain in the interval 177–270; it reads PPVQIEELIE…LQTSRTTLVP (94 aa).

Belongs to the cytokine receptor-like factor 3 family.

Its subcellular location is the cytoplasm. In terms of biological role, may play a role in the negative regulation of cell cycle progression. The polypeptide is Cytokine receptor-like factor 3 (crlf3) (Xenopus laevis (African clawed frog)).